A 332-amino-acid polypeptide reads, in one-letter code: Ketol-acid reductoisomerase (NADP(+)) (332 aa).

The KARI N-terminal Rossmann domain occupies 2–182 (AKIYTDKDVS…GATRAGVIET (181 aa)). Residues 25–28 (YGSQ), serine 53, and 83–86 (DMIQ) each bind NADP(+). Histidine 108 is a catalytic residue. Residue glycine 134 participates in NADP(+) binding. One can recognise a KARI C-terminal knotted domain in the interval 183-328 (TFKEETETDL…RSLRDIILRG (146 aa)). Positions 191, 195, 227, and 231 each coordinate Mg(2+). Serine 252 provides a ligand contact to substrate.

It belongs to the ketol-acid reductoisomerase family. Requires Mg(2+) as cofactor.

It carries out the reaction (2R)-2,3-dihydroxy-3-methylbutanoate + NADP(+) = (2S)-2-acetolactate + NADPH + H(+). The catalysed reaction is (2R,3R)-2,3-dihydroxy-3-methylpentanoate + NADP(+) = (S)-2-ethyl-2-hydroxy-3-oxobutanoate + NADPH + H(+). It participates in amino-acid biosynthesis; L-isoleucine biosynthesis; L-isoleucine from 2-oxobutanoate: step 2/4. It functions in the pathway amino-acid biosynthesis; L-valine biosynthesis; L-valine from pyruvate: step 2/4. In terms of biological role, involved in the biosynthesis of branched-chain amino acids (BCAA). Catalyzes an alkyl-migration followed by a ketol-acid reduction of (S)-2-acetolactate (S2AL) to yield (R)-2,3-dihydroxy-isovalerate. In the isomerase reaction, S2AL is rearranged via a Mg-dependent methyl migration to produce 3-hydroxy-3-methyl-2-ketobutyrate (HMKB). In the reductase reaction, this 2-ketoacid undergoes a metal-dependent reduction by NADPH to yield (R)-2,3-dihydroxy-isovalerate. The chain is Ketol-acid reductoisomerase (NADP(+)) from Sulfolobus acidocaldarius (strain ATCC 33909 / DSM 639 / JCM 8929 / NBRC 15157 / NCIMB 11770).